The sequence spans 432 residues: Major royal jelly protein 1 (432 aa).

The signal sequence occupies residues 1 to 19 (MTRLFMLVCLGIVCQGTTG). Asn-28, Asn-144, and Asn-177 each carry an N-linked (GlcNAc...) asparagine glycan. 3 cysteine pairs are disulfide-bonded: Cys-118–Cys-150, Cys-132–Cys-195, and Cys-329–Cys-416. Pro-364 contacts 24-methylenecholesterol. At His-431 the chain carries Histidine amide; atypical. Leu-432 is modified (leucine amide; atypical).

It belongs to the major royal jelly protein family. Is present in royal jelly in different forms: monomer (55 kDa), oligomeric subunit (ca. 287-420 kDa), and water-insoluble aggregates in sediment after interaction with fatty acids. Component of the apisin heterooligomer complex consisting of 4 copies of MRJP1 and 4 copies of apisimin, associated with 8 molecules of 24-methylenecholesterol; apisimin forms a bridge connecting two MRJP1 dimers. At low pH multiple apisin octamers stack to form filaments that increase the viscosity of royal jelly; these filaments may be stabilized by bound fatty acid chains. The mandibular gland, where royal jelly is produced, has low pH conditions favouring filament formation, while the higher pH of the insect midgut favors filament disassembly. Post-translationally, N-glycosylated on Asn-28, Asn-144 and Asn-177. Glycosylation is required to prevent apisin multimers from aggregating. In terms of processing, jellein-2 is probably processed to yield jellein-1 and jellein-4. In terms of tissue distribution, found in and secreted from the hypopharyngeal glands of the worker honey bee (at protein level); expression peaks at 12 days post eclosion. Expressed in the brains of worker bees (at protein level); found in antennal lobe, optical lobe and a subpopulation of Kenyon cells in the mushroom body. Found in the ommatidia of worker bees (at protein level). Expressed in the spermatheca of adult queen bees (at protein level); expression levels are higher in mated queens than in virgin queens. Expressed in queen bee ovaries and male drone testes.

The protein resides in the secreted. It is found in the cytoplasm. The protein localises to the cell projection. Its subcellular location is the rhabdomere. It localises to the cytoskeleton. Functionally, most abundant protein component of royal jelly, a substance produced in the hypopharyngeal gland containing proteins, free amino acids, fatty acids, sugars and other nutrients, which is fed to developing larvae by worker nurse bees. Major royal jelly proteins (Mrjps) are high in essential amino acids and probably have a nutritional function in larval food. All larvae are fed some royal jelly (also known as worker jelly) early in their development but it forms the principal source of nutrition for larvae destined to become queen bees. Induces the differentiation of honey bee larvae into queens through an Egfr-mediated signaling pathway. Promotes body size increase by activating p70 S6 kinase, stimulates ovary development by augmenting the titer of vitellogenin (Vg) and juvenile hormone, and reduces developmental time by increasing the activity of mitogen-activated protein kinase and inducing 20-hydroxyecdysone (ecdysterone, 20E) production. Together with apisimin forms the apisin complex that polymerizes at low pH, forming a fiber network and increasing the viscosity of royal jelly. The viscous royal Jelly placed in honeycomb cells containing larvae destined to become queens acts as both a food supply and an adhesive preventing larvae from falling out; queens are reared in special large cells oriented vertically. Produced in the spermatheca of adult queen bees, along with other major royal jelly proteins, where it may act as a nutrient supply for sperm stored by mated queens, or be involved in energy metabolism. Has antibacterial activity against the Gram-positive bacteria S.aureus ATCC 6535, S.saprophyticus and B.subtilis CCT2471, and the Gram-negative bacteria E.coli CCT1371, E.cloacae ATCC 23355, K.pneumoniae ATCC 13883 and P.aeruginosa ATCC 27853, and antifungal activity against C.albicans. Lack cytolytic activity and does not induce rat peritoneal mast cell degranulation. In terms of biological role, lacks antibacterial and antifungal activity. Lacks cytolytic activity and does not induce rat peritoneal mast cell degranulation. The protein is Major royal jelly protein 1 of Apis mellifera (Honeybee).